We begin with the raw amino-acid sequence, 499 residues long: WD repeat-containing protein 55 homolog (499 aa).

The tract at residues 1 to 130 (MHTHNNFKTP…EATFDLDVDD (130 aa)) is disordered. Composition is skewed to acidic residues over residues 12–23 (DEDELDDLDEDM) and 31–48 (IEQEVLNESDSDNDEYDL). The segment covering 91 to 103 (DDAGGASAGGATS) has biased composition (low complexity). A compositionally biased stretch (polar residues) spans 113-122 (PSGSNRQSEA). WD repeat units lie at residues 154-193 (KLEDFITDICFHPDRDIIALATIIGDVHLYEYDNEANKLL), 198-237 (VHSKACRDVEFTEDGRFLLTCSKDKCVMVTDMETEKLKKL), 241-279 (AHDDAINTLHVLNENLFATGDDAGTVKLWDLRTKNAIFE), 282-321 (ELEDQITQLTTNDQNKLLLATSADGYLTTFNIAARKMYVQ), 324-363 (PYEEELSCMGIYRGDSKLVVGTSKGRLYTYNWGQFGYHCD), and 408-447 (QHNMPIESLDVNSSGELIASSSHNNDVRFWNVKYFEDFGD). The disordered stretch occupies residues 480 to 499 (TKEDADDDDHDPSAGPSNMA).

This sequence belongs to the WD repeat WDR55 family.

The protein is WD repeat-containing protein 55 homolog of Drosophila yakuba (Fruit fly).